Consider the following 205-residue polypeptide: N-(5'-phosphoribosyl)anthranilate isomerase (205 aa).

The protein belongs to the TrpF family.

It carries out the reaction N-(5-phospho-beta-D-ribosyl)anthranilate = 1-(2-carboxyphenylamino)-1-deoxy-D-ribulose 5-phosphate. The protein operates within amino-acid biosynthesis; L-tryptophan biosynthesis; L-tryptophan from chorismate: step 3/5. The chain is N-(5'-phosphoribosyl)anthranilate isomerase from Trichlorobacter lovleyi (strain ATCC BAA-1151 / DSM 17278 / SZ) (Geobacter lovleyi).